The following is a 171-amino-acid chain: Peptide methionine sulfoxide reductase MsrA (171 aa).

C13 is an active-site residue.

Belongs to the MsrA Met sulfoxide reductase family.

The catalysed reaction is L-methionyl-[protein] + [thioredoxin]-disulfide + H2O = L-methionyl-(S)-S-oxide-[protein] + [thioredoxin]-dithiol. It catalyses the reaction [thioredoxin]-disulfide + L-methionine + H2O = L-methionine (S)-S-oxide + [thioredoxin]-dithiol. Its function is as follows. Has an important function as a repair enzyme for proteins that have been inactivated by oxidation. Catalyzes the reversible oxidation-reduction of methionine sulfoxide in proteins to methionine. The chain is Peptide methionine sulfoxide reductase MsrA from Mycobacterium ulcerans (strain Agy99).